A 529-amino-acid polypeptide reads, in one-letter code: tRNA-2-methylthio-N(6)-dimethylallyladenosine synthase 1 (529 aa).

The segment at 1 to 21 (MTQDHIVTERPPATRNDTAGN) is disordered. The MTTase N-terminal domain occupies 25–141 (RTYEVRTLGC…LPVLLERSRH (117 aa)). [4Fe-4S] cluster contacts are provided by Cys34, Cys70, Cys104, Cys178, Cys182, and Cys185. One can recognise a Radical SAM core domain in the interval 164–407 (RDSAYAAWVS…VALQERISLE (244 aa)). Positions 410–480 (RSLVGTRQEL…PHHLIADGPL (71 aa)) constitute a TRAM domain. Positions 481 to 504 (LQHRRTPAGDASERGQTPTTRGVG) are disordered.

It belongs to the methylthiotransferase family. MiaB subfamily. As to quaternary structure, monomer. The cofactor is [4Fe-4S] cluster.

It localises to the cytoplasm. It catalyses the reaction N(6)-dimethylallyladenosine(37) in tRNA + (sulfur carrier)-SH + AH2 + 2 S-adenosyl-L-methionine = 2-methylsulfanyl-N(6)-dimethylallyladenosine(37) in tRNA + (sulfur carrier)-H + 5'-deoxyadenosine + L-methionine + A + S-adenosyl-L-homocysteine + 2 H(+). Catalyzes the methylthiolation of N6-(dimethylallyl)adenosine (i(6)A), leading to the formation of 2-methylthio-N6-(dimethylallyl)adenosine (ms(2)i(6)A) at position 37 in tRNAs that read codons beginning with uridine. This chain is tRNA-2-methylthio-N(6)-dimethylallyladenosine synthase 1, found in Mycobacterium marinum (strain ATCC BAA-535 / M).